We begin with the raw amino-acid sequence, 184 residues long: Type-1 fimbrial protein, A chain (184 aa).

The signal sequence occupies residues 1-23 (MKIKTLAIVVLSALSLSSTAALA). An intrachain disulfide couples Cys46 to Cys86.

The protein belongs to the fimbrial protein family.

It localises to the fimbrium. Functionally, fimbriae (also called pili), polar filaments radiating from the surface of the bacterium to a length of 0.5-1.5 micrometers and numbering 100-300 per cell, enable bacteria to colonize the epithelium of specific host organs. This Escherichia coli protein is Type-1 fimbrial protein, A chain.